Here is a 73-residue protein sequence, read N- to C-terminus: uncharacterized protein (73 aa).

This is an uncharacterized protein from Invertebrate iridescent virus 6 (IIV-6).